We begin with the raw amino-acid sequence, 177 residues long: Phycoerythrin beta subunit (177 aa).

Residues tyrosine 18, lysine 28, asparagine 35, and aspartate 39 each coordinate (2R,3E)-phycocyanobilin. Positions 50, 54, and 61 each coordinate 15,16-dihydrobiliverdin. Arginine 77, cysteine 82, arginine 84, and aspartate 85 together coordinate (2R,3E)-phycocyanobilin. Residues arginine 129, glutamine 148, and lysine 149 each contribute to the 15,16-dihydrobiliverdin site. Residues proline 154, glycine 156, and cysteine 158 each coordinate (2R,3E)-phycocyanobilin.

The protein belongs to the phycobiliprotein family. As to quaternary structure, heterotetramer of 2 identical alpha chains and 2 identical beta chains which form 2 alpha-beta heterodimers within the heterotetramer. The two alpha-beta heterodimers are rotated to an open configuration in contrast to the closed configuration found in other cryptophyte species due to the insertion of a single amino acid, 'Asp-65', in a conserved region of the alpha chain. In the open form, the central chromophores are not in physical contact but are separated by a water-filled channel. Post-translationally, contains three phycocyanobilin chromophores and one 15,16-dihydrobiliverdin chromophore with binding of the phycocyanobilin chromophores mediated by both the alpha and beta subunits.

It is found in the plastid. Its subcellular location is the chloroplast thylakoid membrane. Light-harvesting photosynthetic bile pigment-protein from the phycobiliprotein complex. In Hemiselmis virescens, this protein is Phycoerythrin beta subunit.